Consider the following 517-residue polypeptide: T-box transcription factor TBX22 (517 aa).

The disordered stretch occupies residues 1-83; it reads MALSSRAHAF…SDESNSQESL (83 aa). The span at 35-45 shows a compositional bias: acidic residues; it reads LQEEQFVEEGE. A compositionally biased stretch (basic and acidic residues) spans 46-66; that stretch reads EILRSPSRDSQQPEKRLKAES. A compositionally biased stretch (low complexity) spans 74-83; it reads SDESNSQESL. The segment at residues 93–280 is a DNA-binding region (T-box); sequence LQGSDLWKRF…RNPFAKGFRD (188 aa). The tract at residues 312–333 is disordered; sequence TQSGSSGSSPVTSSGGAPSPLN. Low complexity predominate over residues 314 to 333; it reads SGSSGSSPVTSSGGAPSPLN.

It localises to the nucleus. Probable transcriptional regulator involved in developmental processes. This is major determinant crucial to palatogenesis. This Mus musculus (Mouse) protein is T-box transcription factor TBX22 (Tbx22).